The sequence spans 338 residues: Methionine import ATP-binding protein MetN (338 aa).

In terms of domain architecture, ABC transporter spans 2-241 (ISLDGIRKVF…PKEHITKEFV (240 aa)). An ATP-binding site is contributed by 38–45 (GYSGAGKS).

It belongs to the ABC transporter superfamily. Methionine importer (TC 3.A.1.24) family. In terms of assembly, the complex is composed of two ATP-binding proteins (MetN), two transmembrane proteins (MetI) and a solute-binding protein (MetQ).

The protein resides in the cell membrane. It carries out the reaction L-methionine(out) + ATP + H2O = L-methionine(in) + ADP + phosphate + H(+). It catalyses the reaction D-methionine(out) + ATP + H2O = D-methionine(in) + ADP + phosphate + H(+). Its function is as follows. Part of the ABC transporter complex MetNIQ involved in methionine import. Responsible for energy coupling to the transport system. This is Methionine import ATP-binding protein MetN from Halalkalibacterium halodurans (strain ATCC BAA-125 / DSM 18197 / FERM 7344 / JCM 9153 / C-125) (Bacillus halodurans).